We begin with the raw amino-acid sequence, 412 residues long: Solute carrier family 22 member 18 (412 aa).

The next 10 membrane-spanning stretches (helical) occupy residues 16–36 (GIII…FMQF), 51–71 (VSFG…GPVF), 117–137 (LPAA…DLTA), 148–168 (LGLC…TLST), 176–196 (AFLA…CIPV), 232–252 (FLVK…FSII), 264–284 (AGYL…LVIG), 294–314 (ALLR…ALMS), 316–336 (VFHF…LNIV), and 380–400 (GVSI…LVLW).

The protein belongs to the major facilitator (TC 2.A.1) superfamily. Organic cation transporter (TC 2.A.1.19) family.

The protein localises to the apical cell membrane. May act as a transporter of organic cations based on a proton efflux antiport mechanism. May play a role in the transport of chloroquine and quinidine-related compounds in kidney. Plays a role in the regulation of lipid metabolism. This is Solute carrier family 22 member 18 (Slc67a1) from Rattus norvegicus (Rat).